A 181-amino-acid polypeptide reads, in one-letter code: Oligoribonuclease (181 aa).

The region spanning 8–171 (LIWIDLEMTG…QDIQESIAEL (164 aa)) is the Exonuclease domain. Tyr-129 is a catalytic residue.

Belongs to the oligoribonuclease family.

Its subcellular location is the cytoplasm. In terms of biological role, 3'-to-5' exoribonuclease specific for small oligoribonucleotides. This chain is Oligoribonuclease, found in Shewanella putrefaciens (strain CN-32 / ATCC BAA-453).